We begin with the raw amino-acid sequence, 324 residues long: Transmembrane protein 171 (324 aa).

4 helical membrane-spanning segments follow: residues 22 to 42 (IFCF…LSIF), 57 to 77 (MVLK…VILA), 113 to 133 (LIFG…GIWV), and 160 to 180 (FLSL…FFVV). Residues 229–239 (PESSASAVAES) show a composition bias toward low complexity. 2 disordered regions span residues 229 to 248 (PESS…LLPN) and 279 to 304 (YTIS…PPRY). Residues 279–291 (YTISGTNSSSEAS) are compositionally biased toward polar residues.

The protein localises to the membrane. This chain is Transmembrane protein 171 (TMEM171), found in Homo sapiens (Human).